Reading from the N-terminus, the 203-residue chain is CCG-binding protein 1 (203 aa).

The disordered stretch occupies residues 156 to 178; the sequence is IPDGLPKSEQELEEEEKSKMPDS. Residues 161–175 show a composition bias toward basic and acidic residues; it reads PKSEQELEEEEKSKM.

In terms of assembly, homotetramer. Interacts with MEE12/CCG, MED7A, MED7B, MED9, AGL49, AGL53, AGL75, AGL80, AGL81, AGL82, AGL103 and NRPB1 (via CTD). As to expression, expressed in roots, leaves, stems and flowers. Expressed in the central cell of mature ovules.

Its subcellular location is the nucleus. The protein resides in the cytoplasm. Its function is as follows. Required for the development of the one-cell zygote and endosperm in embryos. Required for micropylar pollen tube guidance, but has no effect on ovule development and gametophytic cell fate specification. May connect transcription factors and the Pol II machinery to regulate pollen tube attraction, via its interactions with AGAMOUS-like (AGL) transcription factors, MEE14/CCG and the Mediator complex. This is CCG-binding protein 1 from Arabidopsis thaliana (Mouse-ear cress).